The sequence spans 321 residues: L-carnitine dehydrogenase (321 aa).

NAD(+) is bound at residue 14–19 (GSGVIG).

The protein belongs to the 3-hydroxyacyl-CoA dehydrogenase family. L-carnitine dehydrogenase subfamily. In terms of assembly, homodimer.

It localises to the cytoplasm. The catalysed reaction is carnitine + NAD(+) = 3-dehydrocarnitine + NADH + H(+). It participates in amine and polyamine metabolism; carnitine metabolism. With respect to regulation, analogs of L-carnitine such as D-carnitine, glycine betaine and choline, are competitive inhibitors of L-carnitine oxidation. Functionally, catalyzes the NAD(+)-dependent oxidation of L-carnitine to 3-dehydrocarnitine. Is specific for L-carnitine and NAD(+) as substrates. D,L-3-hydroxybutyrate, L-lactate, ethanol, L-malate and D,L-isocitrate are not substrates. Is involved in a L-carnitine degradation pathway that allows P.aeruginosa to grow on L-carnitine as the sole source of carbon and nitrogen. The polypeptide is L-carnitine dehydrogenase (Pseudomonas aeruginosa (strain ATCC 15692 / DSM 22644 / CIP 104116 / JCM 14847 / LMG 12228 / 1C / PRS 101 / PAO1)).